The chain runs to 216 residues: Mite allergen Lep d 7 (216 aa).

Residues 1–19 (MQYLAIAVIVALAGLSAAA) form the signal peptide.

Belongs to the mite group 7 allergen family.

It is found in the secreted. The sequence is that of Mite allergen Lep d 7 from Lepidoglyphus destructor (Storage mite).